Here is an 801-residue protein sequence, read N- to C-terminus: Cadherin-20 (801 aa).

Positions 1 to 34 (MWTTGRMSNAKSWLGLGTSLYFWALMDLATTVLS) are cleaved as a signal peptide. A propeptide spanning residues 35 to 59 (STPMPEVELDTLFSGKPQSHQRSRR) is cleaved from the precursor. Topologically, residues 60–619 (SWVWNQFFVL…AYMLPVSLSR (560 aa)) are extracellular. Cadherin domains lie at 61–165 (WVWN…EPKF), 166–274 (LDGP…PPRF), 275–389 (PQKH…PPVF), 390–494 (EPRF…APEF), and 494–610 (FPRF…SPEA). The N-linked (GlcNAc...) asparagine glycan is linked to Asn261. N-linked (GlcNAc...) asparagine glycosylation is found at Asn420, Asn461, and Asn542. Residues 620 to 640 (GALIAILACVFVLLVLVLLIL) traverse the membrane as a helical segment. The Cytoplasmic segment spans residues 641–801 (SMRRHRKQPY…GASEGPSPLW (161 aa)).

The protein localises to the cell membrane. Functionally, cadherins are calcium-dependent cell adhesion proteins. They preferentially interact with themselves in a homophilic manner in connecting cells; cadherins may thus contribute to the sorting of heterogeneous cell types. This is Cadherin-20 (Cdh20) from Rattus norvegicus (Rat).